A 355-amino-acid polypeptide reads, in one-letter code: uncharacterized protein (355 aa).

3 disordered regions span residues 1–121 (MPID…MELR), 226–253 (RLMN…KSSM), and 336–355 (NLHR…RKRT). Residues 24–37 (LESESSSESDYEEV) show a composition bias toward acidic residues. The span at 65–87 (ETKTSSNFQNINPVQTIDNSASE) shows a compositional bias: polar residues. Positions 91-105 (DASSAEGGSNSAASS) are enriched in low complexity. A compositionally biased stretch (acidic residues) spans 106–117 (SEEEDSSDSEYE). The segment covering 226–245 (RLMNSEEREAQDLKDAEASR) has biased composition (basic and acidic residues).

This is an uncharacterized protein from Schizosaccharomyces pombe (strain 972 / ATCC 24843) (Fission yeast).